Reading from the N-terminus, the 454-residue chain is MAAWKSWAALRLCATVVLLDMVVCKGFVEDLDESFKENRNDDIWLVDFYAPWCGHCKKLEPIWNEVGLEMKSIGSPVKVGKMDATSYSSIASEFGVRGYPTIKLLKGDLAYNHRGPRTKDDIIEFAHRVSGALIRPLPSQQMFEHMQKRHRVFFVYIGGESPLKEKYIDAASELIVYTYFFSASEEVVPEYVTLKEMPAVLVFKDETYFVYDEYEDGDLSSWINRERFQNYLAMDGFLLYELGDTGKLVALAVIDEKNTSVEHTRLKSIIQEVARDYRDLFHRDFQFGHMDGNDYINTLLMDELTVPTVVVLNTSNQQYFLLDRQIKNVEDMVQFINNILDGTVEAQGGDSILQRLKRIVFDAKSTIVSIFKSSPLMGCFLFGLPLGVISIMCYGIYTADTDGGYIEERYEVSKSENENQEQIEESKEQQEPSSGGSVVPTVQEPKDVLEKKKD.

The signal sequence occupies residues 1–24 (MAAWKSWAALRLCATVVLLDMVVC). The region spanning 25 to 128 (KGFVEDLDES…KDDIIEFAHR (104 aa)) is the Thioredoxin domain. The Lumenal segment spans residues 25-375 (KGFVEDLDES…TIVSIFKSSP (351 aa)). Active-site nucleophile residues include Cys-53 and Cys-56. Cys-53 and Cys-56 are disulfide-bonded. Residues Asn-258 and Asn-313 are each glycosylated (N-linked (GlcNAc...) asparagine). A helical transmembrane segment spans residues 376–396 (LMGCFLFGLPLGVISIMCYGI). Residues 397-454 (YTADTDGGYIEERYEVSKSENENQEQIEESKEQQEPSSGGSVVPTVQEPKDVLEKKKD) lie on the Cytoplasmic side of the membrane. The tract at residues 412–454 (VSKSENENQEQIEESKEQQEPSSGGSVVPTVQEPKDVLEKKKD) is disordered. The segment covering 444–454 (EPKDVLEKKKD) has biased composition (basic and acidic residues). Residues 451 to 454 (KKKD) carry the Di-lysine motif motif.

The protein belongs to the protein disulfide isomerase family.

Its subcellular location is the endoplasmic reticulum membrane. It catalyses the reaction Catalyzes the rearrangement of -S-S- bonds in proteins.. Its function is as follows. Probable disulfide isomerase, which participates in the folding of proteins containing disulfide bonds. May act as a dithiol oxidase. Acts as a regulator of endoplasmic reticulum-mitochondria contact sites via its ability to regulate redox signals. The chain is Protein disulfide-isomerase TMX3 (TMX3) from Pongo abelii (Sumatran orangutan).